Reading from the N-terminus, the 35-residue chain is Trypsin inhibitor 1 (35 aa).

Cystine bridges form between C2/C19, C9/C23, and C18/C34.

Trypsin inhibitor. This is Trypsin inhibitor 1 from Spinacia oleracea (Spinach).